The chain runs to 476 residues: Sulfate adenylyltransferase subunit 1 (476 aa).

A tr-type G domain is found at 24 to 228 (KSLLRFLTCG…MAWYQGPTLL (205 aa)). The segment at 33–40 (GSVDDGKS) is G1. 33–40 (GSVDDGKS) contributes to the GTP binding site. Residues 91–95 (GITID) form a G2 region. The interval 112 to 115 (DTPG) is G3. Residues 112-116 (DTPGH) and 167-170 (NKMD) contribute to the GTP site. Residues 167 to 170 (NKMD) are G4. Positions 205-207 (SAL) are G5.

The protein belongs to the TRAFAC class translation factor GTPase superfamily. Classic translation factor GTPase family. CysN/NodQ subfamily. As to quaternary structure, heterodimer composed of CysD, the smaller subunit, and CysN.

It catalyses the reaction sulfate + ATP + H(+) = adenosine 5'-phosphosulfate + diphosphate. Its pathway is sulfur metabolism; hydrogen sulfide biosynthesis; sulfite from sulfate: step 1/3. In terms of biological role, with CysD forms the ATP sulfurylase (ATPS) that catalyzes the adenylation of sulfate producing adenosine 5'-phosphosulfate (APS) and diphosphate, the first enzymatic step in sulfur assimilation pathway. APS synthesis involves the formation of a high-energy phosphoric-sulfuric acid anhydride bond driven by GTP hydrolysis by CysN coupled to ATP hydrolysis by CysD. The chain is Sulfate adenylyltransferase subunit 1 from Vibrio vulnificus (strain CMCP6).